Here is a 629-residue protein sequence, read N- to C-terminus: tRNA uridine 5-carboxymethylaminomethyl modification enzyme MnmG (629 aa).

Residues 13 to 18 (GGGHAG), Val-125, and Ser-180 contribute to the FAD site. Position 273–287 (273–287 (GPRYCPSIEDKVMRF)) interacts with NAD(+). Gln-370 is an FAD binding site.

This sequence belongs to the MnmG family. Homodimer. Heterotetramer of two MnmE and two MnmG subunits. Requires FAD as cofactor.

It localises to the cytoplasm. Its function is as follows. NAD-binding protein involved in the addition of a carboxymethylaminomethyl (cmnm) group at the wobble position (U34) of certain tRNAs, forming tRNA-cmnm(5)s(2)U34. In Salmonella paratyphi A (strain ATCC 9150 / SARB42), this protein is tRNA uridine 5-carboxymethylaminomethyl modification enzyme MnmG.